The primary structure comprises 197 residues: NADH-quinone oxidoreductase subunit C (197 aa).

This sequence belongs to the complex I 30 kDa subunit family. NDH-1 is composed of 14 different subunits. Subunits NuoB, C, D, E, F, and G constitute the peripheral sector of the complex.

It localises to the cell inner membrane. The catalysed reaction is a quinone + NADH + 5 H(+)(in) = a quinol + NAD(+) + 4 H(+)(out). Functionally, NDH-1 shuttles electrons from NADH, via FMN and iron-sulfur (Fe-S) centers, to quinones in the respiratory chain. The immediate electron acceptor for the enzyme in this species is believed to be ubiquinone. Couples the redox reaction to proton translocation (for every two electrons transferred, four hydrogen ions are translocated across the cytoplasmic membrane), and thus conserves the redox energy in a proton gradient. This Rickettsia prowazekii (strain Madrid E) protein is NADH-quinone oxidoreductase subunit C.